Consider the following 340-residue polypeptide: Adenosine kinase (340 aa).

D293 is an active-site residue.

Belongs to the carbohydrate kinase PfkB family. It depends on Mg(2+) as a cofactor.

The catalysed reaction is adenosine + ATP = AMP + ADP + H(+). Its pathway is purine metabolism; AMP biosynthesis via salvage pathway; AMP from adenosine: step 1/1. Its function is as follows. ATP dependent phosphorylation of adenosine and other related nucleoside analogs to monophosphate derivatives. ADO1 does not play a major role in adenine utilization in yeast. Its physiological role could primarily be to recycle adenosine produced by the methyl cycle. The polypeptide is Adenosine kinase (Saccharomyces cerevisiae (strain ATCC 204508 / S288c) (Baker's yeast)).